The primary structure comprises 552 residues: uncharacterized protein (552 aa).

The DhaL domain maps to 8-200; that stretch reads KLFADMIIQG…LLCVYEGFLK (193 aa).

This is an uncharacterized protein from Staphylococcus epidermidis (strain ATCC 12228 / FDA PCI 1200).